Consider the following 324-residue polypeptide: Quinolinate synthase 1 (324 aa).

Residues H48 and S66 each contribute to the iminosuccinate site. C111 contributes to the [4Fe-4S] cluster binding site. Residues 137–139 (YVN) and S154 each bind iminosuccinate. C196 lines the [4Fe-4S] cluster pocket. Residues 222–224 (HPE) and T239 contribute to the iminosuccinate site. Residue C282 participates in [4Fe-4S] cluster binding.

It belongs to the quinolinate synthase family. Type 2 subfamily. The cofactor is [4Fe-4S] cluster.

Its subcellular location is the cytoplasm. It carries out the reaction iminosuccinate + dihydroxyacetone phosphate = quinolinate + phosphate + 2 H2O + H(+). Its pathway is cofactor biosynthesis; NAD(+) biosynthesis; quinolinate from iminoaspartate: step 1/1. Catalyzes the condensation of iminoaspartate with dihydroxyacetone phosphate to form quinolinate. The protein is Quinolinate synthase 1 of Mesorhizobium japonicum (strain LMG 29417 / CECT 9101 / MAFF 303099) (Mesorhizobium loti (strain MAFF 303099)).